We begin with the raw amino-acid sequence, 184 residues long: Fungal defensin copsin (184 aa).

The first 23 residues, 1-23, serve as a signal peptide directing secretion; that stretch reads MKLSTSLLAIVAVASTFIGNALS. Residues 24 to 127 constitute a propeptide that is removed on maturation; sequence ATTVPGCFAE…LGRVLPVEKR (104 aa). Gln128 is subject to Pyrrolidone carboxylic acid. Cystine bridges form between Cys130-Cys159, Cys137-Cys167, Cys145-Cys175, Cys149-Cys177, Cys152-Cys184, and Cys162-Cys181.

It belongs to the invertebrate defensin family. Post-translationally, contains a unique connectivity of 6 cysteine bonds in contrast to most other CS-alpha-beta defensins which are linked by 3 or 4 disulfide bonds. In terms of processing, disulfide bonds are essential for structural integrity and antibacterial activity, since activity is lost after treatment with reducing agents. Thanks to disulfide bonds and N-terminal pyroglutamate, the protein is extremely stable in a wide pH and temperature range and insensitive toward proteases.

The protein resides in the secreted. It is found in the target cell membrane. Functionally, antimicrobial peptide that acts against Gram-positive bacteria (Listeria spp., Enterococcus spp., B.subtilis, B.anthracis, P.aeruginosa). Is not active against Gram-negative bacteria. It selectively inhibits peptidoglycan biosynthesis through complex formation with the cell wall precursor lipid II (1:1 molar ratio), probably anchoring lipid II to the membrane, thus inhibiting cell wall synthesis. The interaction with lipid II involves the third position of the pentapeptide. Shows bactericidal activity at about 2-fold minimal inhibitory concentrations (MIC), but does not form pore across the membrane. This Coprinopsis cinerea (Inky cap fungus) protein is Fungal defensin copsin.